Here is a 534-residue protein sequence, read N- to C-terminus: 2,3-bisphosphoglycerate-independent phosphoglycerate mutase (534 aa).

The Mn(2+) site is built by D15 and S65. S65 acts as the Phosphoserine intermediate in catalysis. Substrate-binding positions include H126, 156–157, R188, R194, 261–264, and K334; these read RD and RPDR. Positions 401, 405, 442, 443, and 460 each coordinate Mn(2+).

Belongs to the BPG-independent phosphoglycerate mutase family. The cofactor is Mn(2+).

The protein resides in the plastid. The protein localises to the chloroplast. It carries out the reaction (2R)-2-phosphoglycerate = (2R)-3-phosphoglycerate. Its pathway is carbohydrate degradation; glycolysis; pyruvate from D-glyceraldehyde 3-phosphate: step 3/5. Its function is as follows. Catalyzes the interconversion of 2-phosphoglycerate and 3-phosphoglycerate. This chain is 2,3-bisphosphoglycerate-independent phosphoglycerate mutase, found in Pyropia yezoensis (Susabi-nori).